We begin with the raw amino-acid sequence, 343 residues long: Anthranilate phosphoribosyltransferase (343 aa).

5-phospho-alpha-D-ribose 1-diphosphate is bound by residues Gly84, 87 to 88, Thr92, 94 to 97, 112 to 120, and Ser124; these read GD, NIST, and KHGNRSVSS. Anthranilate is bound at residue Gly84. Ser96 lines the Mg(2+) pocket. Asn115 contributes to the anthranilate binding site. Arg170 serves as a coordination point for anthranilate. Mg(2+) contacts are provided by Asp229 and Glu230.

It belongs to the anthranilate phosphoribosyltransferase family. As to quaternary structure, homodimer. Mg(2+) serves as cofactor.

It carries out the reaction N-(5-phospho-beta-D-ribosyl)anthranilate + diphosphate = 5-phospho-alpha-D-ribose 1-diphosphate + anthranilate. It functions in the pathway amino-acid biosynthesis; L-tryptophan biosynthesis; L-tryptophan from chorismate: step 2/5. Functionally, catalyzes the transfer of the phosphoribosyl group of 5-phosphorylribose-1-pyrophosphate (PRPP) to anthranilate to yield N-(5'-phosphoribosyl)-anthranilate (PRA). The protein is Anthranilate phosphoribosyltransferase of Stenotrophomonas maltophilia (strain R551-3).